Reading from the N-terminus, the 425-residue chain is Glutamate-1-semialdehyde 2,1-aminomutase (425 aa).

Lys-264 carries the post-translational modification N6-(pyridoxal phosphate)lysine.

This sequence belongs to the class-III pyridoxal-phosphate-dependent aminotransferase family. HemL subfamily. As to quaternary structure, homodimer. Pyridoxal 5'-phosphate is required as a cofactor.

The protein resides in the cytoplasm. The catalysed reaction is (S)-4-amino-5-oxopentanoate = 5-aminolevulinate. The protein operates within porphyrin-containing compound metabolism; protoporphyrin-IX biosynthesis; 5-aminolevulinate from L-glutamyl-tRNA(Glu): step 2/2. This chain is Glutamate-1-semialdehyde 2,1-aminomutase, found in Leptospira biflexa serovar Patoc (strain Patoc 1 / Ames).